The primary structure comprises 547 residues: Dihydroxy-acid dehydratase (547 aa).

Mg(2+) is bound at residue aspartate 78. Position 119 (cysteine 119) interacts with [2Fe-2S] cluster. Residues aspartate 120 and lysine 121 each contribute to the Mg(2+) site. Lysine 121 is modified (N6-carboxylysine). Cysteine 191 is a [2Fe-2S] cluster binding site. Glutamate 439 is a Mg(2+) binding site. Serine 464 (proton acceptor) is an active-site residue.

Belongs to the IlvD/Edd family. As to quaternary structure, homodimer. [2Fe-2S] cluster serves as cofactor. Requires Mg(2+) as cofactor.

It carries out the reaction (2R)-2,3-dihydroxy-3-methylbutanoate = 3-methyl-2-oxobutanoate + H2O. It catalyses the reaction (2R,3R)-2,3-dihydroxy-3-methylpentanoate = (S)-3-methyl-2-oxopentanoate + H2O. It participates in amino-acid biosynthesis; L-isoleucine biosynthesis; L-isoleucine from 2-oxobutanoate: step 3/4. The protein operates within amino-acid biosynthesis; L-valine biosynthesis; L-valine from pyruvate: step 3/4. In terms of biological role, functions in the biosynthesis of branched-chain amino acids. Catalyzes the dehydration of (2R,3R)-2,3-dihydroxy-3-methylpentanoate (2,3-dihydroxy-3-methylvalerate) into 2-oxo-3-methylpentanoate (2-oxo-3-methylvalerate) and of (2R)-2,3-dihydroxy-3-methylbutanoate (2,3-dihydroxyisovalerate) into 2-oxo-3-methylbutanoate (2-oxoisovalerate), the penultimate precursor to L-isoleucine and L-valine, respectively. This is Dihydroxy-acid dehydratase from Archaeoglobus fulgidus (strain ATCC 49558 / DSM 4304 / JCM 9628 / NBRC 100126 / VC-16).